The following is a 360-amino-acid chain: UPF0324 membrane protein DVU_0123 (360 aa).

10 helical membrane passes run 20–42 (VTESLPGLLLVCAVALVASFVAP), 57–79 (KDFILAIIFGIIIRNTVGVPAVF), 100–122 (SYSLAGLVSVGAQALVFIAVFLF), 142–164 (AACLAAGMSVCGVSATIAIAPAV), 171–193 (MAYSIAVVLMFGLLALIAFPLIG), 203–225 (FGAFAGVGIVNSAQVLAAGFGFS), 232–254 (AGIYNIGRVVFLPFVVLMLAIMA), 278–297 (FPLFVLGFLAIVCLNTAGVL), 310–327 (EWAFLLGFASIGLTTRLS), and 337–359 (FLFGFGVAGLKAALALAAVLLFM).

This sequence belongs to the UPF0324 family.

It is found in the cell membrane. The polypeptide is UPF0324 membrane protein DVU_0123 (Nitratidesulfovibrio vulgaris (strain ATCC 29579 / DSM 644 / CCUG 34227 / NCIMB 8303 / VKM B-1760 / Hildenborough) (Desulfovibrio vulgaris)).